The primary structure comprises 890 residues: Alanine--tRNA ligase (890 aa).

The Zn(2+) site is built by His565, His569, Cys677, and His681.

It belongs to the class-II aminoacyl-tRNA synthetase family. It depends on Zn(2+) as a cofactor.

It localises to the cytoplasm. It catalyses the reaction tRNA(Ala) + L-alanine + ATP = L-alanyl-tRNA(Ala) + AMP + diphosphate. Catalyzes the attachment of alanine to tRNA(Ala) in a two-step reaction: alanine is first activated by ATP to form Ala-AMP and then transferred to the acceptor end of tRNA(Ala). Also edits incorrectly charged Ser-tRNA(Ala) and Gly-tRNA(Ala) via its editing domain. This chain is Alanine--tRNA ligase, found in Zymomonas mobilis subsp. mobilis (strain ATCC 31821 / ZM4 / CP4).